The sequence spans 792 residues: Ribonucleoside-diphosphate reductase large subunit (792 aa).

The ATP-cone domain maps to 1–92 (MHVIKRDGRQ…VSNLHKETKK (92 aa)). ATP-binding positions include 5–6 (KR), 11–17 (ERVMFDK), threonine 53, and aspartate 57. At lysine 17 the chain carries N6-acetyllysine. Residues serine 202 and serine 217 each contribute to the GDP site. Cysteine 218 and cysteine 444 are oxidised to a cystine. Residues 226 to 228 (DSI), lysine 243, arginine 256, and 263 to 264 (AG) contribute to the dTTP site. Lysine 376 carries the N6-acetyllysine modification. GDP is bound at residue asparagine 427. Residue asparagine 427 is the Proton acceptor of the active site. Cysteine 429 serves as the catalytic Cysteine radical intermediate. Residues glutamate 431 and 604–607 (TAST) contribute to the GDP site. Glutamate 431 acts as the Proton acceptor in catalysis. Threonine 751 bears the Phosphothreonine mark.

Belongs to the ribonucleoside diphosphate reductase large chain family. As to quaternary structure, heterodimer of a large and a small subunit. Heterodimer with small subunit RRM2 or RRM2B. The heterodimer with RRM2 has higher catalytic activity than the heterodimer with RRM2B. Interacts with AHCYL1 which inhibits its activity.

Its subcellular location is the cytoplasm. It carries out the reaction a 2'-deoxyribonucleoside 5'-diphosphate + [thioredoxin]-disulfide + H2O = a ribonucleoside 5'-diphosphate + [thioredoxin]-dithiol. With respect to regulation, under complex allosteric control mediated by deoxynucleoside triphosphates and ATP binding to separate specificity and activation sites on the M1 subunit. The type of nucleotide bound at the specificity site determines substrate preference. It seems probable that ATP makes the enzyme reduce CDP and UDP, dGTP favors ADP reduction and dTTP favors GDP reduction. Stimulated by ATP and inhibited by dATP binding to the activity site, the dATP inhibition is mediated by AHCYL1 which stabilizes dATP in the site. Provides the precursors necessary for DNA synthesis. Catalyzes the biosynthesis of deoxyribonucleotides from the corresponding ribonucleotides. The sequence is that of Ribonucleoside-diphosphate reductase large subunit (RRM1) from Homo sapiens (Human).